The sequence spans 149 residues: MLEKLKKLLSKKGDNFSTPAPVSVDDYLEEIEEIPLTPVEEEKVIIKVCSIEDEKDAVNAIVMAEAGYIVIAKTPNLEKEIDDEFIEIIRKMRNEVAKFGGMLLALGDEHLLITPRNVVIEKLIKEKKEESNVTKENIEIKEEKEENSE.

The span at Glu130–Lys144 shows a compositional bias: basic and acidic residues. The tract at residues Glu130–Glu149 is disordered.

This is an uncharacterized protein from Methanocaldococcus jannaschii (strain ATCC 43067 / DSM 2661 / JAL-1 / JCM 10045 / NBRC 100440) (Methanococcus jannaschii).